Here is a 418-residue protein sequence, read N- to C-terminus: Actin-related protein 3 (418 aa).

Ala-2 is modified (N-acetylalanine).

Belongs to the actin family. ARP3 subfamily. In terms of assembly, component of the Arp2/3 complex composed of ACTR2/ARP2, ACTR3/ARP3, ARPC1B/p41-ARC, ARPC2/p34-ARC, ARPC3/p21-ARC, ARPC4/p20-ARC and ARPC5/p16-ARC. Detected in fibroblasts.

It localises to the cytoplasm. It is found in the cytoskeleton. The protein resides in the cell projection. The protein localises to the nucleus. ATP-binding component of the Arp2/3 complex, a multiprotein complex that mediates actin polymerization upon stimulation by nucleation-promoting factor (NPF). The Arp2/3 complex mediates the formation of branched actin networks in the cytoplasm, providing the force for cell motility. Seems to contact the pointed end of the daughter actin filament. In addition to its role in the cytoplasmic cytoskeleton, the Arp2/3 complex also promotes actin polymerization in the nucleus, thereby regulating gene transcription and repair of damaged DNA. The Arp2/3 complex promotes homologous recombination (HR) repair in response to DNA damage by promoting nuclear actin polymerization, leading to drive motility of double-strand breaks (DSBs). The chain is Actin-related protein 3 (ACTR3) from Gallus gallus (Chicken).